Consider the following 346-residue polypeptide: 4-hydroxy-2-oxovalerate aldolase 2 (346 aa).

Positions 8 to 260 (VTVHDMTLRD…ETGVDVFKIQ (253 aa)) constitute a Pyruvate carboxyltransferase domain. 16-17 (RD) contacts substrate. Asp-17 serves as a coordination point for Mn(2+). The Proton acceptor role is filled by His-20. Ser-170 and His-199 together coordinate substrate. Mn(2+) is bound by residues His-199 and His-201. Tyr-290 contributes to the substrate binding site.

This sequence belongs to the 4-hydroxy-2-oxovalerate aldolase family.

It carries out the reaction (S)-4-hydroxy-2-oxopentanoate = acetaldehyde + pyruvate. The protein is 4-hydroxy-2-oxovalerate aldolase 2 (bphX3) of Metapseudomonas furukawaii (Pseudomonas furukawaii).